The chain runs to 674 residues: F420-dependent formate dehydrogenase 1 subunit alpha (674 aa).

The region spanning 3–59 (LDFIHTICPYCGTGCGVDLVVKDGTLVGTNPFKRHPVNEGKTCIKGSYCHEFVHRDD) is the 4Fe-4S Mo/W bis-MGD-type domain. [4Fe-4S] cluster contacts are provided by Cys-10, Cys-13, Cys-17, and Cys-45. Sec-132 is a non-standard amino acid (selenocysteine).

The protein belongs to the prokaryotic molybdopterin-containing oxidoreductase family. As to quaternary structure, dimer of an alpha (FdhA1) and a beta (FdhB1) subunit. [4Fe-4S] cluster serves as cofactor. Mo-bis(molybdopterin guanine dinucleotide) is required as a cofactor. Requires Zn(2+) as cofactor.

The enzyme catalyses oxidized coenzyme F420-(gamma-L-Glu)(n) + formate + 2 H(+) = reduced coenzyme F420-(gamma-L-Glu)(n) + CO2. Catalyzes the oxidation of formate to carbon dioxide, with coenzyme F420 as the electron acceptor. In vitro can also use methyl viologen as electron acceptor. This Methanococcus maripaludis (strain DSM 14266 / JCM 13030 / NBRC 101832 / S2 / LL) protein is F420-dependent formate dehydrogenase 1 subunit alpha.